The chain runs to 64 residues: Alpha-conotoxin-like Ai1.2 (64 aa).

Positions 1-17 are cleaved as a signal peptide; that stretch reads MFTVFLLVVLATTVVSS. Positions 18–43 are excised as a propeptide; the sequence is TSGRRAFRGRNAAAKASGLVGLTDRR. Disulfide bonds link Cys46/Cys52 and Cys47/Cys60. The tract at residues 48 to 50 is ser-Xaa-Pro motif, crucial for potent interaction with nAChR; that stretch reads SDP. The residue at position 61 (Gly61) is a Glycine amide.

Belongs to the conotoxin A superfamily. In terms of tissue distribution, expressed by the venom duct.

The protein resides in the secreted. Functionally, alpha-conotoxins act on postsynaptic membranes, they bind to the nicotinic acetylcholine receptors (nAChR) and thus inhibit them. The chain is Alpha-conotoxin-like Ai1.2 from Conus ammiralis (Admiral cone).